A 340-amino-acid polypeptide reads, in one-letter code: Glycerol-3-phosphate dehydrogenase [NAD(P)+] (340 aa).

Positions 14, 15, and 109 each coordinate NADPH. Sn-glycerol 3-phosphate contacts are provided by lysine 109, glycine 140, and serine 142. Alanine 144 is an NADPH binding site. Residues lysine 195, aspartate 248, serine 258, arginine 259, and asparagine 260 each contribute to the sn-glycerol 3-phosphate site. Lysine 195 acts as the Proton acceptor in catalysis. An NADPH-binding site is contributed by arginine 259. The NADPH site is built by valine 283 and glutamate 285.

The protein belongs to the NAD-dependent glycerol-3-phosphate dehydrogenase family.

It localises to the cytoplasm. The catalysed reaction is sn-glycerol 3-phosphate + NAD(+) = dihydroxyacetone phosphate + NADH + H(+). The enzyme catalyses sn-glycerol 3-phosphate + NADP(+) = dihydroxyacetone phosphate + NADPH + H(+). It participates in membrane lipid metabolism; glycerophospholipid metabolism. Catalyzes the reduction of the glycolytic intermediate dihydroxyacetone phosphate (DHAP) to sn-glycerol 3-phosphate (G3P), the key precursor for phospholipid synthesis. The polypeptide is Glycerol-3-phosphate dehydrogenase [NAD(P)+] (Syntrophobacter fumaroxidans (strain DSM 10017 / MPOB)).